The sequence spans 848 residues: Transforming growth factor beta receptor type 3 (848 aa).

The first 20 residues, 1 to 20, serve as a signal peptide directing secretion; that stretch reads MTLHCVVALFALISSCLATA. Residues 21 to 784 are Extracellular-facing; sequence GPEPGVQCAL…IFHGLDTLTV (764 aa). Asn-34 and Asn-141 each carry an N-linked (GlcNAc...) asparagine glycan. A disulfide bridge links Cys-52 with Cys-197. The tract at residues 390–448 is disordered; it reads SGEGAARHGGLPFPFPYIPRRGRQDGGKDRLPRPKDPVVPSIQLLPGPREPQEAQGSRD. The segment covering 411–425 has biased composition (basic and acidic residues); that stretch reads GRQDGGKDRLPRPKD. The region spanning 454–729 is the ZP domain; it reads RCDSEKMLVA…PKCVLPDEAC (276 aa). N-linked (GlcNAc...) asparagine glycosylation is present at Asn-491. Residues Ser-529, Ser-533, and Ser-544 are each glycosylated (O-linked (Xyl...) (glycosaminoglycan) serine). N-linked (GlcNAc...) asparagine glycosylation is found at Asn-570, Asn-589, and Asn-696. 3 disulfides stabilise this stretch: Cys-638-Cys-704, Cys-659-Cys-729, and Cys-709-Cys-722. Residues 736-750 are interaction with TGF-beta ligand; the sequence is MIWAMMQNKKTFTKP. The chain crosses the membrane as a helical span at residues 785–806; it reads MGIAFAAFVIGALLTGALWYIY. At 807 to 848 the chain is on the cytoplasmic side; sequence SHTGDSAGRQPVPTSPPASENSSAAHSLGSTQSTPCSSSSAA. Positions 813–848 are disordered; it reads AGRQPVPTSPPASENSSAAHSLGSTQSTPCSSSSAA. Low complexity predominate over residues 833–848; it reads SLGSTQSTPCSSSSAA. At Thr-837 the chain carries Phosphothreonine.

As to quaternary structure, forms homodimers and homooligomers. Interacts with DYNLT4. Interacts with integrin ITGA5:ITGB1; this interaction promotes the internalization and trafficking of ITGA5:ITGB1 into endocytic vesicles. Interacts with TGFB1, BMP2, BMP5, BMP7 or GDF5 and inhibin A via the ligand binding domains. Interacts with ALK3/BMPR1A; this interaction results in the cell surface retention of BMPR1A. Interacts with ALK6/BMPR1B; this interaction enhances BMPR1B-mediated stimulation of the BMP signaling pathway. Interacts with the scaffolding protein beta-arrestin2/ARRB2; this interaction mediates internalization of TGFBR3 and thus regulates migration, actin cytoskeleton and activation of CDC42. Post-translationally, extensively modified by glycosaminoglycan groups (GAG). In terms of processing, phosphorylated in the cytoplasmic domain by the type II receptor TGFBR2 at THR-837 to mediate recruitment of ARRB2 and subsequent internalization of TGFBR2 and TGFBR3.

It is found in the cell membrane. The protein resides in the secreted. It localises to the extracellular space. Its subcellular location is the extracellular matrix. Functionally, cell surface receptor that regulates diverse cellular processes including cell proliferation, differentiation, migration, and apoptosis. Initiates BMP, inhibin, and TGF-beta signaling pathways by interacting with different ligands including TGFB1, BMP2, BMP5, BMP7 or GDF5. Alternatively, acts as a cell surface coreceptor for BMP ligands, serving to enhance ligand binding by differentially regulating BMPR1A/ALK3 and BMPR1B/ALK6 receptor trafficking. Promotes epithelial cell adhesion, focal adhesion formation and integrin signaling during epithelial cell spreading on fibronectin. By interacting with the scaffolding protein beta-arrestin2/ARRB2, regulates migration or actin cytoskeleton and promotes the activation of CDC42 as well as the inhibition of NF-kappa-B. In gonadotrope cells, acts as an inhibin A coreceptor and regulates follicle-stimulating hormone (FSH) levels and female fertility. Plays a role in the inhibition of directed and random cell migration in epithelial cells by altering the actin cytoskeletal organization. Participates in epithelial-mesenchymal transformation (EMT) upon binding to BMP2 or TGFB2, by activating the PAR6/SMURF1/RHOA pathway. The protein is Transforming growth factor beta receptor type 3 (TGFBR3) of Sus scrofa (Pig).